We begin with the raw amino-acid sequence, 349 residues long: MIPLIPMFLKQSLFFSLALTGMTTLVLTVSLGVPVMKWLKRKNYRDYIHKEYCEKLEMLHKDKAEVPTGGGVLLFISLIASLLVWLPWGKFSTWFFIILLTCYAGLGWYDDRIKIKRKQGHGLKAKHKFMVQIAIAAFTLIALPYIYGSTEPLWTLKIPFMEGMLSLPFWLGKVFCLGLALVAIIGTSNAVNLTDGLDGLAAGTMSFAALGFIFVALRSSTIPIAQDVAYVLAALVGACIGFLWYNGFPAQLFMGDTGSLLLGGLLGSCAVMLRAECILVVIGGVFVAEAGSVILQVLSCRLRKKRLFLCSPLHHHYEYQGLPETKIVMRFWIFSFVCAGLGIAAVLWR.

The next 10 membrane-spanning stretches (helical) occupy residues 13–33 (LFFS…SLGV), 69–89 (GGGV…LPWG), 91–111 (FSTW…WYDD), 129–149 (FMVQ…IYGS), 165–185 (LSLP…VAII), 197–217 (LDGL…FVAL), 228–248 (VAYV…YNGF), 252–272 (LFMG…CAVM), 278–298 (ILVV…LQVL), and 327–347 (IVMR…AAVL).

This sequence belongs to the glycosyltransferase 4 family. MraY subfamily. Requires Mg(2+) as cofactor.

It is found in the cell inner membrane. The catalysed reaction is UDP-N-acetyl-alpha-D-muramoyl-L-alanyl-gamma-D-glutamyl-meso-2,6-diaminopimeloyl-D-alanyl-D-alanine + di-trans,octa-cis-undecaprenyl phosphate = di-trans,octa-cis-undecaprenyl diphospho-N-acetyl-alpha-D-muramoyl-L-alanyl-D-glutamyl-meso-2,6-diaminopimeloyl-D-alanyl-D-alanine + UMP. It participates in cell wall biogenesis; peptidoglycan biosynthesis. Its function is as follows. Catalyzes the initial step of the lipid cycle reactions in the biosynthesis of the cell wall peptidoglycan: transfers peptidoglycan precursor phospho-MurNAc-pentapeptide from UDP-MurNAc-pentapeptide onto the lipid carrier undecaprenyl phosphate, yielding undecaprenyl-pyrophosphoryl-MurNAc-pentapeptide, known as lipid I. The protein is Phospho-N-acetylmuramoyl-pentapeptide-transferase of Chlamydia pneumoniae (Chlamydophila pneumoniae).